The following is a 708-amino-acid chain: Quinohemoprotein alcohol dehydrogenase (708 aa).

An N-terminal signal peptide occupies residues 1-31 (MERLIDNSHGWPGRMVWLLAACLGSAAAFAQ). A pyrroloquinoline quinone-binding site is contributed by E101. Residues C147 and C148 are joined by a disulfide bond. Pyrroloquinoline quinone-binding positions include R153, T198, and 214-215 (GA). E216 is a binding site for Ca(2+). Residue T274 participates in pyrroloquinoline quinone binding. N294 and D339 together coordinate Ca(2+). The active-site Proton acceptor is the D339. Pyrroloquinoline quinone contacts are provided by residues K366, 425–426 (NW), and V575. Residues 619–708 (YDPAKVEAGT…GTADAIRPKP (90 aa)) enclose the Cytochrome c domain. Heme c-binding residues include C635, C638, H639, and M678.

It belongs to the bacterial PQQ dehydrogenase family. In terms of assembly, monomer. The cofactor is pyrroloquinoline quinone. Requires Ca(2+) as cofactor. Heme c serves as cofactor. In terms of processing, in the crystallographic structures Trp-543 is oxidized to 2'-hydroxytryptophan.

It is found in the periplasm. The enzyme catalyses 2 oxidized [azurin] + a primary alcohol = 2 reduced [azurin] + an aldehyde + 2 H(+). Catalyzes the dye-linked oxidation of primary alcohols to the corresponding aldehydes and the (subsequent) oxidation of the aldehydes to carboxylic acids. Methanol is not a substrate. This is Quinohemoprotein alcohol dehydrogenase from Comamonas testosteroni (Pseudomonas testosteroni).